The chain runs to 426 residues: MISYEPVRGMKDYYGEELHKIKVVENAFLKIVKLAGYQEVETPIVEDFQLFALKGGEELRNTMYVFKDKAGREVALRPEFTPSIVRFYLNSLQHLPKPIRLYYLGTVYRYDEPQFGRYREFRQAGIELLGSSNIYSDLEILQILIEIYRELNLINKIRLKINNISLIRKILNKLNISDNLQEHFLHLIDKGKIDEALSLLPSSEYTELITNILSVNNLDISSYNKIKEDLTEKYNLKDLIQDLDRIMLLKNILDNLGVNSYIDLGFVRGLAYYTGLIFEVLHPSVSFSIAGGGRYDNLVELYGGPQTPAIGFAIGVERTALVLEEPNTVKEKQNKIGVIVLSDEAILYAIRIVDKLRSNNYIATINLKSISISKLIPSYAEEGYSFLIFIGKKEYEDKTITLKNLSTKEQVTIKEENLLDYLKQII.

The protein belongs to the class-II aminoacyl-tRNA synthetase family.

It is found in the cytoplasm. It carries out the reaction tRNA(His) + L-histidine + ATP = L-histidyl-tRNA(His) + AMP + diphosphate + H(+). This chain is Histidine--tRNA ligase, found in Sulfurisphaera tokodaii (strain DSM 16993 / JCM 10545 / NBRC 100140 / 7) (Sulfolobus tokodaii).